The primary structure comprises 146 residues: MLHQIKPFKGARKTVKRLGRGCGSGTGKTSGKGHKGQLARSGGGVRPGFEGGQIPFFQRIPKRGFHNINQKKYSIVNLGALEILENNTLVNQELLLEKKIIKSILPNGVKILSKGKLTKKLNFKVSKYSKKAQENIKLVGGNIEVN.

The interval 1-46 (MLHQIKPFKGARKTVKRLGRGCGSGTGKTSGKGHKGQLARSGGGVR) is disordered. Basic residues predominate over residues 9–19 (KGARKTVKRLG). The span at 20–30 (RGCGSGTGKTS) shows a compositional bias: gly residues.

Belongs to the universal ribosomal protein uL15 family. Part of the 50S ribosomal subunit.

In terms of biological role, binds to the 23S rRNA. This Phytoplasma mali (strain AT) protein is Large ribosomal subunit protein uL15.